A 369-amino-acid chain; its full sequence is RAB6-interacting golgin (369 aa).

The disordered stretch occupies residues 1–128; sequence MAQGWAGFSE…HNNVEILPPK (128 aa). The segment covering 11–27 has biased composition (basic and acidic residues); sequence EELRRLKQTKDPFEPQR. Polar residues-rich tracts occupy residues 46 to 61 and 82 to 93; these read EQSQ…TSLL and SPTLPSHFTLTS. Residues 106-120 are compositionally biased toward basic and acidic residues; that stretch reads QPKELGLENSHDGHN. Residues 145–297 are a coiled coil; the sequence is RWEVLQQEQR…EVERLLHEQE (153 aa). Positions 188 to 369 are necessary for interaction with RCHY1; it reads IQKELQALDD…GNDISAALAT (182 aa). Positions 334–369 are disordered; the sequence is VSPKVDDQCGNSSSIPFLSPNCPNQEGNDISAALAT. Polar residues predominate over residues 342 to 361; it reads CGNSSSIPFLSPNCPNQEGN.

It belongs to the GORAB family. In terms of assembly, interacts with SCYL1. Interacts with RCHY1 and RAB6A/RAB6.

The protein resides in the cytoplasm. It is found in the golgi apparatus. The sequence is that of RAB6-interacting golgin (GORAB) from Homo sapiens (Human).